Reading from the N-terminus, the 452-residue chain is SAGA complex/transcription factor TFIID complex subunit Taf6 (452 aa).

Residues 4–68 enclose the Histone-fold domain; that stretch reads TVWNIESIKD…TSADISSALR (65 aa).

This sequence belongs to the TAF6 family. In terms of assembly, component of the 1.8 MDa SAGA (Spt-Ada-Gcn5 acetyltransferase) complex, which is composed of 19 subunits tra1, spt7, taf5, ngg1/ada3, sgf73, spt20, spt8, taf12, taf6, hfi1/ada1, ubp8, gcn5, ada2, spt3, sgf29, taf10, taf9, sgf11 and sus1. The SAGA complex is composed of 4 modules, namely the HAT (histone acetyltransferase) module (gcn5, ada2, ngg1/ada3 and sgf29), the DUB (deubiquitinating) module (ubp8, sgf11, sgf73 and sus1), the core or TAF (TBP-associated factor) module (taf5, taf6, taf9, taf10 and taf12), and the Tra1 or SPT (Suppressor of Ty) module (tra1, hfi1/ada1, spt3, spt7, spt8 and spt20). The Tra1/SPT module binds activators, the core module recruits TBP (TATA-binding protein), the HAT module contains the histone H3 acetyltransferase gcn5, and the DUB module comprises the histone H2B deubiquitinase ubp8. Interacts with gcn5, taf5 and taf73. Component of the 1.2 MDa TFIID complex, which is composed of TATA-binding protein (TBP) and the 14 TBP-associated factors (TAFs). It comprises 1 copy of each taf1, taf2, taf3, taf7, taf8, taf11, taf13, 2 copies of each taf4, taf5, taf6, taf9, taf10, taf12, and 3 copies of taf14. In TFIID, taf6 heterodimerizes with taf9, forming ultimately an octamer consisting of a taf6-taf9 heterotetramer core flanked by taf4-taf12 dimers on either side, similar to the histone H2A-H2B-H3-H4 octamer.

It is found in the nucleus. In terms of biological role, functions as a component of both the DNA-binding general transcription initiation factor complex TFIID and the transcription coactivator SAGA complex. Binding of TFIID to a promoter (with or without TATA element) is the initial step in pre-initiation complex (PIC) formation. TFIID plays a key role in the regulation of gene expression by RNA polymerase II through different activities such as transcription activator interaction, core promoter recognition and selectivity, TFIIA and TFIIB interaction, chromatin modification (histone acetylation by TAF1), facilitation of DNA opening and initiation of transcription. SAGA acts as a general cofactor required for essentially all RNA polymerase II transcription. At the promoters, SAGA is required for transcription pre-initiation complex (PIC) recruitment. It influences RNA polymerase II transcriptional activity through different activities such as TBP interaction (via core/TAF module) and promoter selectivity, interaction with transcription activators (via Tra1/SPT module), and chromatin modification through histone acetylation (via HAT module) and deubiquitination (via DUB module). SAGA preferentially acetylates histones H3 (to form H3K9ac, H3K14ac, H3K18ac and H3K23ac) and H2B and deubiquitinates histone H2B. SAGA interacts with DNA via upstream activating sequences (UASs). The chain is SAGA complex/transcription factor TFIID complex subunit Taf6 from Schizosaccharomyces pombe (strain 972 / ATCC 24843) (Fission yeast).